Reading from the N-terminus, the 140-residue chain is MAIHYETKATNVGGRKGHVYTDDRALDIDIVPPAQADGKATNPEQLFAAGYASCFNGAFDLILKQNKVRDAHPEVTLTVRLEDDPDSESPQLSVSIDATIKNVISQEEAEKYLQMAHEFCPYSKATQGNINVDLNVNVVD.

It belongs to the OsmC/Ohr family.

The sequence is that of Organic hydroperoxide resistance protein-like from Staphylococcus aureus (strain bovine RF122 / ET3-1).